A 176-amino-acid polypeptide reads, in one-letter code: Inorganic pyrophosphatase (176 aa).

Substrate-binding residues include K30, R44, and Y56. Mg(2+) contacts are provided by D66, D71, and D103. Y142 is a substrate binding site.

The protein belongs to the PPase family. In terms of assembly, homohexamer. Mg(2+) is required as a cofactor.

Its subcellular location is the cytoplasm. The enzyme catalyses diphosphate + H2O = 2 phosphate + H(+). Functionally, catalyzes the hydrolysis of inorganic pyrophosphate (PPi) forming two phosphate ions. The sequence is that of Inorganic pyrophosphatase from Vibrio parahaemolyticus serotype O3:K6 (strain RIMD 2210633).